Here is a 74-residue protein sequence, read N- to C-terminus: Protein A30 homolog (74 aa).

Belongs to the chordopoxvirinae A30 family. As to quaternary structure, interacts with protein G7; the interaction stabilizes both proteins. Phosphorylated by viral F10 kinase.

Functionally, required for the association between the dense viroplasm and the viral membranes to form the mature virion (MV). The polypeptide is Protein A30 homolog (Fowlpox virus (strain NVSL) (FPV)).